The sequence spans 259 residues: Expansin-B6 (259 aa).

The first 24 residues, 1–24 (MASSSHRYFALLALFAVSLKFCYC), serve as a signal peptide directing secretion. N-linked (GlcNAc...) asparagine glycosylation is present at Asn-26. An Expansin-like EG45 domain is found at 52–160 (GGACGFAVAN…IRVECLYRRT (109 aa)). 3 cysteine pairs are disulfide-bonded: Cys-55–Cys-82, Cys-85–Cys-155, and Cys-90–Cys-96. Positions 173–254 (YYISFVVEYE…NWKPNETYRS (82 aa)) constitute an Expansin-like CBD domain. N-linked (GlcNAc...) asparagine glycosylation is present at Asn-249.

It belongs to the expansin family. Expansin B subfamily.

Its subcellular location is the secreted. It is found in the cell wall. The protein resides in the membrane. Its function is as follows. May cause loosening and extension of plant cell walls by disrupting non-covalent bonding between cellulose microfibrils and matrix glucans. The polypeptide is Expansin-B6 (Arabidopsis thaliana (Mouse-ear cress)).